We begin with the raw amino-acid sequence, 780 residues long: Pendrin (780 aa).

Residues 1-87 (MAAPGGRSEP…YRVKEWLLSD (87 aa)) are Cytoplasmic-facing. Residues 88–108 (VISGVSTGLVATLQGMAYALL) form a helical membrane-spanning segment. A109 is a topological domain (extracellular). A helical membrane pass occupies residues 110–130 (AVPVGYGLYSAFFPILTYFIF). Topologically, residues 131 to 135 (GTSRH) are cytoplasmic. A helical transmembrane segment spans residues 136 to 156 (ISVGPFPVVSLMVGSVVLSMA). Residues 157–191 (PDEHFLVSSSNGTVLNTTMIDTAARDTARVLIASA) are Extracellular-facing. Residues 192-212 (LTLLVGIIQLIFGGLQIGFIV) traverse the membrane as a helical segment. Residues 213 to 218 (RYLADP) lie on the Cytoplasmic side of the membrane. The chain crosses the membrane as a helical span at residues 219 to 239 (LVGGFTTAAAFQVLVSQLKIV). At 240-263 (LNVSTKNYNGVLSIIYTLVEIFQN) the chain is on the extracellular side. Residues 264–284 (IGDTNLADFTAGLLTIVVCMA) traverse the membrane as a helical segment. The Cytoplasmic segment spans residues 285-295 (VKELNDRFRHK). The chain crosses the membrane as a helical span at residues 296 to 316 (IPVPIPIEVIVTIIATAISYG). Topologically, residues 317–344 (ANLEKNYNAGIVKSIPRGFLPPELPPVS) are extracellular. Residues 345-365 (LFSEMLAASFSIAVVAYAIAV) traverse the membrane as a helical segment. Residues 366 to 384 (SVGKVYATKYDYTIDGNQE) lie on the Cytoplasmic side of the membrane. Residues 385 to 405 (FIAFGISNIFSGFFSCFVATT) traverse the membrane as a helical segment. Topologically, residues 406 to 421 (ALSRTAVQESTGGKTQ) are extracellular. The chain crosses the membrane as a helical span at residues 422–442 (VAGIISAAIVMIAILALGKLL). The Cytoplasmic segment spans residues 443 to 448 (EPLQKS). A helical transmembrane segment spans residues 449 to 469 (VLAAVVIANLKGMFMQLCDIP). Residues 470–486 (RLWRQNKIDAVIWVFTC) lie on the Extracellular side of the membrane. The helical transmembrane segment at 487–507 (IVSIILGLDLGLLAGLIFGLL) threads the bilayer. Over 508-780 (TVVLRVQFPS…QDEAMRTLAS (273 aa)) the chain is Cytoplasmic. The region spanning 535-729 (NYKNIEEPQG…LTVHDAILYL (195 aa)) is the STAS domain.

The protein belongs to the SLC26A/SulP transporter (TC 2.A.53) family. In terms of assembly, interacts with IQGAP1; this interaction enhances the chloride-bicarbonate exchange activity of SLC26A4. As to expression, highly expressed in the kidney (at protein level). High expression in adult thyroid, lower expression in adult and fetal kidney and fetal brain. Not expressed in other tissues.

It localises to the cell membrane. The protein localises to the apical cell membrane. It catalyses the reaction chloride(in) = chloride(out). The enzyme catalyses iodide(out) = iodide(in). The catalysed reaction is hydrogencarbonate(in) + chloride(out) = hydrogencarbonate(out) + chloride(in). It carries out the reaction iodide(in) + hydrogencarbonate(out) = iodide(out) + hydrogencarbonate(in). It catalyses the reaction iodide(in) + chloride(out) = iodide(out) + chloride(in). The enzyme catalyses formate(in) + chloride(out) = formate(out) + chloride(in). In terms of biological role, sodium-independent transporter of chloride and iodide. Mediates electroneutral chloride-bicarbonate, chloride-iodide and chloride-formate exchange with 1:1 stoichiometry. Mediates electroneutral iodide-bicarbonate exchange. The protein is Pendrin (SLC26A4) of Homo sapiens (Human).